Consider the following 126-residue polypeptide: Glycine cleavage system H protein (126 aa).

Positions 21–103 constitute a Lipoyl-binding domain; it reads TATIGISEHA…YEGGWIVKVK (83 aa). N6-lipoyllysine is present on Lys-62.

Belongs to the GcvH family. In terms of assembly, the glycine cleavage system is composed of four proteins: P, T, L and H. It depends on (R)-lipoate as a cofactor.

Its function is as follows. The glycine cleavage system catalyzes the degradation of glycine. The H protein shuttles the methylamine group of glycine from the P protein to the T protein. The polypeptide is Glycine cleavage system H protein (Vibrio campbellii (strain ATCC BAA-1116)).